A 467-amino-acid chain; its full sequence is Septin-10 (467 aa).

In terms of domain architecture, Septin-type G spans 63–329 (QGFCFNILCV…ELYRRCKLEE (267 aa)). Residues 73 to 80 (GETGIGKS) form a G1 motif region. GTP-binding positions include 73–80 (GETGIGKS), glycine 128, 209–217 (KADTVSKTE), glycine 263, and arginine 278. The G3 motif stretch occupies residues 125–128 (NTVG). A G4 motif region spans residues 208–211 (AKAD).

This sequence belongs to the TRAFAC class TrmE-Era-EngA-EngB-Septin-like GTPase superfamily. Septin GTPase family. As to quaternary structure, septins polymerize into heterooligomeric protein complexes that form filaments, and can associate with cellular membranes, actin filaments and microtubules. GTPase activity is required for filament formation. Interacts with ADGB. Post-translationally, proteolytically cleaved in vitro in a calmodulin-dependent manner.

It is found in the cytoplasm. The protein localises to the cytoskeleton. Its subcellular location is the cell projection. The protein resides in the cilium. It localises to the flagellum. In terms of biological role, filament-forming cytoskeletal GTPase. May play a role in cytokinesis (Potential). The sequence is that of Septin-10 from Pongo abelii (Sumatran orangutan).